The primary structure comprises 87 residues: UPF0175 protein AF_0597 (87 aa).

It belongs to the UPF0175 family.

The protein is UPF0175 protein AF_0597 of Archaeoglobus fulgidus (strain ATCC 49558 / DSM 4304 / JCM 9628 / NBRC 100126 / VC-16).